The chain runs to 343 residues: UDP-3-O-acylglucosamine N-acyltransferase (343 aa).

His237 functions as the Proton acceptor in the catalytic mechanism.

It belongs to the transferase hexapeptide repeat family. LpxD subfamily. In terms of assembly, homotrimer.

It catalyses the reaction a UDP-3-O-[(3R)-3-hydroxyacyl]-alpha-D-glucosamine + a (3R)-hydroxyacyl-[ACP] = a UDP-2-N,3-O-bis[(3R)-3-hydroxyacyl]-alpha-D-glucosamine + holo-[ACP] + H(+). Its pathway is bacterial outer membrane biogenesis; LPS lipid A biosynthesis. Functionally, catalyzes the N-acylation of UDP-3-O-acylglucosamine using 3-hydroxyacyl-ACP as the acyl donor. Is involved in the biosynthesis of lipid A, a phosphorylated glycolipid that anchors the lipopolysaccharide to the outer membrane of the cell. The protein is UDP-3-O-acylglucosamine N-acyltransferase of Synechococcus sp. (strain JA-3-3Ab) (Cyanobacteria bacterium Yellowstone A-Prime).